A 238-amino-acid chain; its full sequence is Probable 2-phosphosulfolactate phosphatase (238 aa).

The protein belongs to the ComB family. It depends on Mg(2+) as a cofactor.

It catalyses the reaction (2R)-O-phospho-3-sulfolactate + H2O = (2R)-3-sulfolactate + phosphate. This chain is Probable 2-phosphosulfolactate phosphatase, found in Clostridium botulinum (strain Eklund 17B / Type B).